Here is an 86-residue protein sequence, read N- to C-terminus: Small nuclear ribonucleoprotein F (86 aa).

The Sm domain occupies 14–86 (NPKPFLKGLV…NVLYIRELPN (73 aa)).

It belongs to the snRNP Sm proteins family. SmF/LSm6 subfamily. In terms of assembly, component of the Sm core complex, present in spliceosomal snRNP U1, U2, U4/U6 and U5. The core complex contains SMB1, SMD1, SMD2, SMD3, SME1, SMX3 and SMX2 (Sm proteins B, D1, D2, D3, E, F and G, respectively), and is probably a heptameric ring structure. SMX3 specifically interacts with SME1. Belongs to the CWC complex (or CEF1-associated complex), a spliceosome sub-complex reminiscent of a late-stage spliceosome composed of the U2, U5 and U6 snRNAs and at least BUD13, BUD31, BRR2, CDC40, CEF1, CLF1, CUS1, CWC2, CWC15, CWC21, CWC22, CWC23, CWC24, CWC25, CWC27, ECM2, HSH155, IST3, ISY1, LEA1, MSL1, NTC20, PRP8, PRP9, PRP11, PRP19, PRP21, PRP22, PRP45, PRP46, SLU7, SMB1, SMD1, SMD2, SMD3, SMX2, SMX3, SNT309, SNU114, SPP2, SYF1, SYF2, RSE1 and YJU2. Component of the U4/U6-U5 tri-snRNP complex composed of the U4, U6 and U5 snRNAs and at least PRP3, PRP4, PRP6, PRP8, PRP18, PRP31, PRP38, SNU13, SNU23, SNU66, SNU114, SPP381, SMB1, SMD1, SMD2, SMD3, SMX2, SMX3, LSM2, LSM3, LSM4, LSM5, LSM6, LSM7, LSM8, BRR2 and DIB1.

The protein resides in the nucleus. It localises to the cytoplasm. In terms of biological role, plays a role in pre-mRNA splicing as a core component of the spliceosomal U1, U2, U4 and U5 small nuclear ribonucleoproteins (snRNPs), the building blocks of the spliceosome. This chain is Small nuclear ribonucleoprotein F (SMX3), found in Saccharomyces cerevisiae (strain ATCC 204508 / S288c) (Baker's yeast).